The following is a 264-amino-acid chain: Rhamnosyltransferase WbbL (264 aa).

This sequence belongs to the glycosyltransferase 2 family.

The protein operates within bacterial outer membrane biogenesis; lipopolysaccharide biosynthesis. Functionally, rhamnosyltransferase involved in lipopolysaccharide biosynthesis. The sequence is that of Rhamnosyltransferase WbbL (wbbL) from Escherichia coli (strain K12).